Reading from the N-terminus, the 352-residue chain is Histidinol-phosphate aminotransferase (352 aa).

Position 221 is an N6-(pyridoxal phosphate)lysine (K221).

It belongs to the class-II pyridoxal-phosphate-dependent aminotransferase family. Histidinol-phosphate aminotransferase subfamily. In terms of assembly, homodimer. It depends on pyridoxal 5'-phosphate as a cofactor.

The catalysed reaction is L-histidinol phosphate + 2-oxoglutarate = 3-(imidazol-4-yl)-2-oxopropyl phosphate + L-glutamate. Its pathway is amino-acid biosynthesis; L-histidine biosynthesis; L-histidine from 5-phospho-alpha-D-ribose 1-diphosphate: step 7/9. The sequence is that of Histidinol-phosphate aminotransferase from Staphylococcus aureus (strain Mu3 / ATCC 700698).